We begin with the raw amino-acid sequence, 686 residues long: Methionine--tRNA ligase (686 aa).

Residues 15–25 (PYANGSIHLGH) carry the 'HIGH' region motif. 4 residues coordinate Zn(2+): Cys-146, Cys-149, Cys-159, and Cys-162. A 'KMSKS' region motif is present at residues 332–336 (KMSKS). Lys-335 is a binding site for ATP. A tRNA-binding domain is found at 585-686 (AFAAVDMRIA…EGAQPGMRVM (102 aa)).

The protein belongs to the class-I aminoacyl-tRNA synthetase family. MetG type 1 subfamily. In terms of assembly, homodimer. Zn(2+) serves as cofactor.

The protein resides in the cytoplasm. The enzyme catalyses tRNA(Met) + L-methionine + ATP = L-methionyl-tRNA(Met) + AMP + diphosphate. In terms of biological role, is required not only for elongation of protein synthesis but also for the initiation of all mRNA translation through initiator tRNA(fMet) aminoacylation. This Vibrio campbellii (strain ATCC BAA-1116) protein is Methionine--tRNA ligase.